Consider the following 213-residue polypeptide: Urease accessory protein UreG (213 aa).

Residue 10–17 (GPVGSGKT) participates in GTP binding.

It belongs to the SIMIBI class G3E GTPase family. UreG subfamily. Homodimer. UreD, UreF and UreG form a complex that acts as a GTP-hydrolysis-dependent molecular chaperone, activating the urease apoprotein by helping to assemble the nickel containing metallocenter of UreC. The UreE protein probably delivers the nickel.

It is found in the cytoplasm. In terms of biological role, facilitates the functional incorporation of the urease nickel metallocenter. This process requires GTP hydrolysis, probably effectuated by UreG. The polypeptide is Urease accessory protein UreG (Deinococcus radiodurans (strain ATCC 13939 / DSM 20539 / JCM 16871 / CCUG 27074 / LMG 4051 / NBRC 15346 / NCIMB 9279 / VKM B-1422 / R1)).